The chain runs to 181 residues: ADP-ribosylation factor 1-like 2 (181 aa).

Glycine 2 carries the N-myristoyl glycine lipid modification. Residues 3-16 (NVFGSLFKGLFGKR) are important for the stable binding to the membranes. Residues 24 to 32 (GLDAAGKTT), 126 to 129 (NKQD), and alanine 160 contribute to the GTP site.

This sequence belongs to the small GTPase superfamily. Arf family. Expressed in hypodermis, intestine, spermatheca, uterus, gonadal sheath, vulva cells, pharynx muscle, body wall muscle, head neurons, ventral nerve cord.

It is found in the golgi apparatus membrane. It catalyses the reaction GTP + H2O = GDP + phosphate + H(+). With respect to regulation, alternates between an inactive GDP-bound form and an active GTP-bound form. Activated by a guanine nucleotide-exchange factor (GEF) and inactivated by GTPase-activating protein (GAP). In terms of biological role, small GTPase involved in protein trafficking between different compartments. Modulates vesicle budding and uncoating within the Golgi complex. In its GTP-bound form, triggers the recruitment of coatomer proteins to the Golgi membrane. The hydrolysis of ARF1-bound GTP, which is mediated by ARFGAPs proteins, is required for dissociation of coat proteins from Golgi membranes and vesicles. Involved in endoplasmic reticulum dynamics during embryogenesis. Also required for adult germline function. Plays a role in cell shedding during embryogenesis probably by promoting the endocytosis of cell adhesion molecules. During neurogenesis, involved in cell autonomous Q.p neuroblast asymmetric divisions that generate one precursor cell and one apoptotic cell, probably by controlling endocytosis. Plays a role in maintaining mitochondrial morphology. The sequence is that of ADP-ribosylation factor 1-like 2 from Caenorhabditis elegans.